A 189-amino-acid polypeptide reads, in one-letter code: Riboflavin transporter RibU (189 aa).

Residues 1–9 (MNGRRKLNM) lie on the Cytoplasmic side of the membrane. The helical transmembrane segment at 10 to 29 (QQNKRLITISMLSAIAFVLT) threads the bilayer. Residues 30-44 (FIKFPIPFLPPYLTL) lie on the Periplasmic side of the membrane. An intramembrane region (helical) is located at residues 45-56 (DFSDVPSLLATF). Topologically, residues 57-58 (TF) are cytoplasmic. The chain crosses the membrane as a helical span at residues 59 to 78 (GPVAGIIVALVKNLLNYLFS). Residues 79–82 (MGDP) lie on the Periplasmic side of the membrane. The chain crosses the membrane as a helical span at residues 83–104 (VGPFANFLAGASFLLTAYAIYK). Residues 105–107 (NKR) are Cytoplasmic-facing. Residues 108 to 132 (STKSLITGLIIATIVMTIVLSILNY) form a helical membrane-spanning segment. The Periplasmic segment spans residues 133–159 (FVLLPLYGMIFNLADIANNLKVIIVSG). A helical membrane pass occupies residues 160–182 (IIPFNIIKGIVISIVFILLYRRL). The Cytoplasmic portion of the chain corresponds to 183 to 189 (ANFLKRI).

The protein belongs to the prokaryotic riboflavin transporter (P-RFT) (TC 2.A.87) family. Forms a stable energy-coupling factor (ECF) transporter complex composed of a membrane-embedded substrate-binding protein (S component), 2 ATP-binding proteins (A component) and 2 transmembrane proteins (T component). May be able to interact with more than 1 S component at a time.

The protein resides in the cell membrane. Its function is as follows. Mediates riboflavin uptake, may also transport FMN and roseoflavin. Probably a riboflavin-binding protein that interacts with the energy-coupling factor (ECF) ABC-transporter complex. Unlike classic ABC transporters this ECF transporter provides the energy necessary to transport a number of different substrates. The substrates themselves are bound by transmembrane, not extracytoplasmic soluble proteins. The chain is Riboflavin transporter RibU (ribU) from Staphylococcus aureus (strain TCH60).